A 417-amino-acid chain; its full sequence is Phosphoribosylamine--glycine ligase (417 aa).

Residues Lys107–Glu313 form the ATP-grasp domain. Leu133 to Ser194 is a binding site for ATP. Mg(2+)-binding residues include Glu283 and Asn285.

This sequence belongs to the GARS family. Requires Mg(2+) as cofactor. It depends on Mn(2+) as a cofactor.

It catalyses the reaction 5-phospho-beta-D-ribosylamine + glycine + ATP = N(1)-(5-phospho-beta-D-ribosyl)glycinamide + ADP + phosphate + H(+). The protein operates within purine metabolism; IMP biosynthesis via de novo pathway; N(1)-(5-phospho-D-ribosyl)glycinamide from 5-phospho-alpha-D-ribose 1-diphosphate: step 2/2. The chain is Phosphoribosylamine--glycine ligase from Caldanaerobacter subterraneus subsp. tengcongensis (strain DSM 15242 / JCM 11007 / NBRC 100824 / MB4) (Thermoanaerobacter tengcongensis).